A 456-amino-acid chain; its full sequence is MNDTIAAVSTASGPGAIGIIRMSGPGALSISSSFLFSKNGFLSPSDIQPRIAIQCVFQIGDRKIDQILFFYFKTPNSYTGEDLCEFHFHGNPILLREALDAIFRAGARPAKQGEFSRRAFLNGKLDLTGVEAIGRLISARSRFELELAQKNVFGEVSRLTSNLRSQLISLKAECEAEIDFSTEDLTYESLEERKVRIEGVKTFCQTVIAKSNSAEKVIQQLRIVLYGEPNTGKSSLMNVLLGKDRSIISEIPGTTRDYISEEILLEGIPVRLVDTAGVRETEDHIERLGIERSEKEFQSADIRLFLIDVSKKEEWKKFIAKAKGRLEGSILVANKIDIRDSSWNPNLFSDVKDLIICEISCKTKEGIPILLDEIQKKAATMGHVEDYVLLEERQRYHFETIVRCLDKTLRLIEEGAPAEIYIQEMNYALSEIGEVNGRVDTEEVLGRIFSKFCIGK.

Residues arginine 21, glutamate 85, and lysine 124 each contribute to the (6S)-5-formyl-5,6,7,8-tetrahydrofolate site. The 160-residue stretch at 220-379 (QLRIVLYGEP…LLDEIQKKAA (160 aa)) folds into the TrmE-type G domain. Residue asparagine 230 coordinates K(+). GTP-binding positions include 230–235 (NTGKSS), 249–255 (SEIPGTT), and 274–277 (DTAG). Serine 234 contacts Mg(2+). K(+)-binding residues include serine 249, isoleucine 251, and threonine 254. Residue threonine 255 coordinates Mg(2+). Lysine 456 contributes to the (6S)-5-formyl-5,6,7,8-tetrahydrofolate binding site.

Belongs to the TRAFAC class TrmE-Era-EngA-EngB-Septin-like GTPase superfamily. TrmE GTPase family. Homodimer. Heterotetramer of two MnmE and two MnmG subunits. It depends on K(+) as a cofactor.

The protein resides in the cytoplasm. In terms of biological role, exhibits a very high intrinsic GTPase hydrolysis rate. Involved in the addition of a carboxymethylaminomethyl (cmnm) group at the wobble position (U34) of certain tRNAs, forming tRNA-cmnm(5)s(2)U34. This chain is tRNA modification GTPase MnmE, found in Leptospira borgpetersenii serovar Hardjo-bovis (strain JB197).